A 623-amino-acid chain; its full sequence is Protein EDS1 (623 aa).

Ala-2 is subject to N-acetylalanine. The active-site Nucleophile is the Ser-123. Residues Asp-187 and His-317 each act as charge relay system in the active site. Residues Val-358–Arg-383 are a coiled coil.

Homodimer. Interacts with RPS4, RPS6, SNC1, SRFR1, AvrRps4 and HopA1. Part of a nuclear complex made of EDS1, PAD4 and SAG101, that can be redirected to the cytoplasm in the presence of an extranuclear form of EDS1. Interacts (via N-terminus) with PAD4 (via N-terminus). Interacts (via N-terminus) with SAG101. EDS1-SAG101 and EDS1-PAD4 form separate complexes in pathogen-unchallenged cells. Part of a nuclear protein complex made of VICTR, PAD4 and EDS1. Interacts with VICTR.

It is found in the nucleus. Its subcellular location is the cytoplasm. The protein localises to the microsome. Functionally, positive regulator of basal resistance and of effector-triggered immunity specifically mediated by TIR-NB-LRR (TNL) resistance proteins. Disruption by bacterial effector of EDS1-TIR-NB-LRR resistance protein interactions constitutes the first step in resistance activation. Acts redundantly with salicylic acid to regulate resistance gene-mediated signaling. Triggers early plant defenses and hypersensitive response independently of PAD4, and then recruits PAD4 to potentiate plant defenses through the accumulation of salicylic acid. Nuclear localization is essential for basal and TNL-conditioned immunity and for reprogramming defense gene expression, while cytoplasmic EDS1 is required to induce a complete immune response. Heterodimerization with PAD4 and/or SGA101 is necessary for TNL-mediated effector-triggered immunity. Contributes to nonhost resistance against E.amylovora. Loss of EDS1-PAD4 interaction compromises basal but not TNL-triggered resistance. Necessary for systemic acquired resistance (SAR) signal generation and perception. Has no direct lipase activity. Putative lipase activity is dispensable for immune functions. This Arabidopsis thaliana (Mouse-ear cress) protein is Protein EDS1.